Here is a 160-residue protein sequence, read N- to C-terminus: Phosphopantetheine adenylyltransferase (160 aa).

A substrate-binding site is contributed by T10. Residues 10 to 11 (TF) and H18 each bind ATP. 3 residues coordinate substrate: K42, L74, and R88. Residues 89–91 (GLR), E99, and 124–130 (NSFISST) each bind ATP.

The protein belongs to the bacterial CoaD family. In terms of assembly, homohexamer. Mg(2+) serves as cofactor.

It localises to the cytoplasm. It catalyses the reaction (R)-4'-phosphopantetheine + ATP + H(+) = 3'-dephospho-CoA + diphosphate. Its pathway is cofactor biosynthesis; coenzyme A biosynthesis; CoA from (R)-pantothenate: step 4/5. Reversibly transfers an adenylyl group from ATP to 4'-phosphopantetheine, yielding dephospho-CoA (dPCoA) and pyrophosphate. The protein is Phosphopantetheine adenylyltransferase of Photobacterium damsela subsp. piscicida (Pasteurella piscicida).